An 818-amino-acid polypeptide reads, in one-letter code: Protein TOC75-3, chloroplastic (818 aa).

A chloroplast-targeting transit peptide spans 1–79 (MAAFSVNGQL…LKNLAKPLAV (79 aa)). Over residues 15 to 41 (TSSTASTSLSSRRKFLSPSSSRLPRIS) the composition is skewed to low complexity. Residues 15 to 67 (TSSTASTSLSSRRKFLSPSSSRLPRISTQSPRVPSIKCSKSLPNRDTETSSKD) form a disordered region. The span at 57–67 (PNRDTETSSKD) shows a compositional bias: basic and acidic residues. A chloroplast; outer membrane-targeting transit peptide spans 80-140 (ASVSSAASFF…KLFSPSPAVA (61 aa)). 3 consecutive POTRA domains span residues 141–246 (DEEQ…FAES), 247–364 (TWQS…VVEG), and 365–448 (DITQ…LKEL). At 141–473 (DEEQSPDWDS…GRGGAPTLAS (333 aa)) the chain is on the chloroplast intermembrane side. The chain crosses the membrane as a beta stranded span at residues 474 to 482 (FQPGGSVTF). The Cytoplasmic portion of the chain corresponds to 483-509 (EHRNLQGLNRSLMGSVTTSNFLNPQDD). Residues 510-518 (LSFKLEYVH) form a beta stranded membrane-spanning segment. The Chloroplast intermembrane portion of the chain corresponds to 519–562 (PYLDGVYNPRNRTFKTSCFNSRKLSPVFTGGPGVEEVPPIWVDR). The beta stranded transmembrane segment at 563–570 (AGVKANIT) threads the bilayer. Residues 571–578 (ENFTRQSK) lie on the Cytoplasmic side of the membrane. The chain crosses the membrane as a beta stranded span at residues 579-586 (FTYGLVME). Over 587–693 (EITTRDESSH…VEQGAGKSPP (107 aa)) the chain is Chloroplast intermembrane. Residues 694–702 (PVLVLHGHY) form a beta stranded membrane-spanning segment. Topologically, residues 703-714 (GGCVGDLPSYDA) are cytoplasmic. Residues 715–723 (FVLGGPYSV) traverse the membrane as a beta stranded segment. At 724 to 785 (RGYNMGELGA…VYRRTGQGSS (62 aa)) the chain is on the chloroplast intermembrane side. A beta stranded transmembrane segment spans residues 786–792 (YGAGVKL). Over 793-806 (GLVRAEYAVDHNNG) the chain is Cytoplasmic. A beta stranded membrane pass occupies residues 807–814 (TGALFFRF). Residues 815 to 818 (GERY) lie on the Chloroplast intermembrane side of the membrane.

It belongs to the TOC75 family. Part of the TOC core complex that includes a protein for the specific recognition of transit peptides surrounded by a ring composed of four proteins forming translocation channels, and four to five GTP-binding proteins providing energy. This core complex can interact with components of the TIC complex to form a larger import complex. Chloroplastic protein precursors such as prSS (precursor of the RuBisCO small subunit) also interact with these complexes. The TOC complex contains a specific subset of polar lipids such as digalactosyldiacylglyceride (DGDG), phosphatidylcholine (PC) and phosphatidylglycerol (PG). TOC75-3 interacts with TOC34/OEP34, TOC159/TOC86, TOC132 and TOC120. Interacts with SP1. Interacts with TIC236. In terms of tissue distribution, mostly expressed in young and actively dividing photosynthetic tissues and, to a lower extent, in old leaves and roots. Particularly low levels in leaves after etiolation.

The protein localises to the plastid. Its subcellular location is the chloroplast outer membrane. Essential protein. Mediates the insertion of proteins targeted to the outer membrane of chloroplasts. Required for the import of protein precursors into chloroplasts. Forms the voltage-dependent preprotein translocation channels (hydrophilic beta barrel) of the TOC complex in the chloroplastic outer membrane. The chain is Protein TOC75-3, chloroplastic from Arabidopsis thaliana (Mouse-ear cress).